A 281-amino-acid chain; its full sequence is Pantothenate synthetase (281 aa).

Residue 30–37 (MGYLHEGH) coordinates ATP. The active-site Proton donor is the His37. Gln61 lines the (R)-pantoate pocket. Residue Gln61 coordinates beta-alanine. 147 to 150 (GEKD) contributes to the ATP binding site. Gln153 contacts (R)-pantoate. ATP contacts are provided by residues Val176 and 184 to 187 (MSSR).

Belongs to the pantothenate synthetase family. Homodimer.

The protein resides in the cytoplasm. It catalyses the reaction (R)-pantoate + beta-alanine + ATP = (R)-pantothenate + AMP + diphosphate + H(+). It functions in the pathway cofactor biosynthesis; (R)-pantothenate biosynthesis; (R)-pantothenate from (R)-pantoate and beta-alanine: step 1/1. Catalyzes the condensation of pantoate with beta-alanine in an ATP-dependent reaction via a pantoyl-adenylate intermediate. In Desulfatibacillum aliphaticivorans, this protein is Pantothenate synthetase.